We begin with the raw amino-acid sequence, 59 residues long: Flagellar basal-body rod protein FlgC (59 aa).

It belongs to the flagella basal body rod proteins family. As to quaternary structure, the basal body constitutes a major portion of the flagellar organelle and consists of four rings (L,P,S, and M) mounted on a central rod. The rod consists of about 26 subunits of FlgG in the distal portion, and FlgB, FlgC and FlgF are thought to build up the proximal portion of the rod with about 6 subunits each.

It localises to the bacterial flagellum basal body. The sequence is that of Flagellar basal-body rod protein FlgC (flgC) from Borrelia hermsii.